We begin with the raw amino-acid sequence, 199 residues long: Peroxiredoxin 2 (199 aa).

Residues methionine 1 to phenylalanine 152 form the Thioredoxin domain. Cysteine 40 (cysteine sulfenic acid (-SOH) intermediate) is an active-site residue. Substrate is bound at residue arginine 115.

This sequence belongs to the peroxiredoxin family. Prx6 subfamily. In terms of assembly, homodecamer. Pentamer of dimers that assemble into a ring structure.

Its subcellular location is the cytoplasm. It catalyses the reaction a hydroperoxide + [thioredoxin]-dithiol = an alcohol + [thioredoxin]-disulfide + H2O. Its function is as follows. Thiol-specific peroxidase that catalyzes the reduction of hydrogen peroxide and organic hydroperoxides to water and alcohols, respectively. Plays a role in cell protection against oxidative stress by detoxifying peroxides. This Thermoplasma acidophilum (strain ATCC 25905 / DSM 1728 / JCM 9062 / NBRC 15155 / AMRC-C165) protein is Peroxiredoxin 2.